The sequence spans 440 residues: MALLCLDGVFLSSAENDFVHRIQEELDRFLLQKQLSKVLLFPPLSSRLRYLIHRTAENFDLLSSFSVGEGWKRRTVICHQDIRVPSSDGLSGPCRAPASCPSRYHGPRPISNQGAAAVPRGARAGRWYRGRKPDQPLYVPRVLRRQEEWGLTSTSVLKREAPAGRDPEEPGDVGAGDPNSDQGLPVLMTQGTEDLKGPGQRCENEPLLDPVGPEPLGPESQSGKGDMVEMATRFGSTLQLDLEKGKESLLEKRLVAEEEEDEEEVEEDGPSSCSEDDYSELLQEITDNLTKKEIQIEKIHLDTSSFVEELPGEKDLAHVVEIYDFEPALKTEDLLATFSEFQEKGFRIQWVDDTHALGIFPCLASAAEALTREFSVLKIRPLTQGTKQSKLKALQRPKLLRLVKERPQTNATVARRLVARALGLQHKKKERPAVRGPLPP.

Residues 16 to 81 enclose the R3H domain; sequence NDFVHRIQEE…KRRTVICHQD (66 aa). Positions 154–225 are disordered; sequence TSVLKREAPA…LGPESQSGKG (72 aa). Positions 157–168 are enriched in basic and acidic residues; that stretch reads LKREAPAGRDPE. The residue at position 236 (serine 236) is a Phosphoserine. A coiled-coil region spans residues 242 to 300; it reads LEKGKESLLEKRLVAEEEEDEEEVEEDGPSSCSEDDYSELLQEITDNLTKKEIQIEKIH. A disordered region spans residues 254–276; that stretch reads LVAEEEEDEEEVEEDGPSSCSED. A compositionally biased stretch (acidic residues) spans 257-276; that stretch reads EEEEDEEEVEEDGPSSCSED.

The polypeptide is R3H and coiled-coil domain-containing protein 1 (Homo sapiens (Human)).